We begin with the raw amino-acid sequence, 492 residues long: Thyroid hormone receptor alpha (492 aa).

Positions 1–33 (MEQKPSKVECGSDPEENSARSPDGKRKRKNGQC) are disordered. The modulating stretch occupies residues 1 to 52 (MEQKPSKVECGSDPEENSARSPDGKRKRKNGQCPLKSSMSGYIPSYLDKDEQ). The Zn(2+) site is built by C53, C56, C70, C73, C91, C97, C107, and C110. 2 NR C4-type zinc fingers span residues 53-73 (CVVC…CEGC) and 91-115 (CKYD…FKKC). The segment at residues 53 to 127 (CVVCGDKATG…VGMAMDLVLD (75 aa)) is a DNA-binding region (nuclear receptor). An NR LBD domain is found at 163-407 (EEWDLIHVAT…EGQQLLGMHV (245 aa)). 2 residues coordinate 3,3',5-triiodo-L-thyronine: R228 and S277. A disordered region spans residues 457–492 (AVCGEDDSSEASSLSSSSSDEDTEVFEDLAGKAASP).

It belongs to the nuclear hormone receptor family. NR1 subfamily. In terms of assembly, binds DNA as a dimer; homodimer and heterodimer with RXRB. Interacts with NCOA3 and NCOA6 coactivators, leading to a strong increase of transcription of target genes. Probably interacts with SFPQ. Interacts with C1D. Interacts with AKAP13. Interacts with TP53INP2. Interacts with PER2. Isoform alpha-2 and isoform alpha-1 interact with TACC1, but the interaction with alpha-1 is weaker. The interaction with isoform alpha-1, but not alpha-2, is decreased in the presence of thyroid hormone T3.

Its subcellular location is the nucleus. The protein resides in the cytoplasm. Functionally, nuclear hormone receptor that can act as a repressor or activator of transcription. High affinity receptor for thyroid hormones, including triiodothyronine and thyroxine. The polypeptide is Thyroid hormone receptor alpha (Thra) (Rattus norvegicus (Rat)).